The chain runs to 145 residues: 3-hydroxyacyl-[acyl-carrier-protein] dehydratase FabZ (145 aa).

Residue histidine 48 is part of the active site.

This sequence belongs to the thioester dehydratase family. FabZ subfamily.

It localises to the cytoplasm. It catalyses the reaction a (3R)-hydroxyacyl-[ACP] = a (2E)-enoyl-[ACP] + H2O. Its function is as follows. Involved in unsaturated fatty acids biosynthesis. Catalyzes the dehydration of short chain beta-hydroxyacyl-ACPs and long chain saturated and unsaturated beta-hydroxyacyl-ACPs. The polypeptide is 3-hydroxyacyl-[acyl-carrier-protein] dehydratase FabZ (Cellvibrio japonicus (strain Ueda107) (Pseudomonas fluorescens subsp. cellulosa)).